The following is a 252-amino-acid chain: Carboxy-S-adenosyl-L-methionine synthase (252 aa).

S-adenosyl-L-methionine is bound by residues tyrosine 45, 70-72, 95-96, 127-128, asparagine 142, and arginine 209; these read GCS, DN, and DI.

This sequence belongs to the class I-like SAM-binding methyltransferase superfamily. Cx-SAM synthase family. Homodimer.

It catalyses the reaction prephenate + S-adenosyl-L-methionine = carboxy-S-adenosyl-L-methionine + 3-phenylpyruvate + H2O. Its function is as follows. Catalyzes the conversion of S-adenosyl-L-methionine (SAM) to carboxy-S-adenosyl-L-methionine (Cx-SAM). In Pseudomonas paraeruginosa (strain DSM 24068 / PA7) (Pseudomonas aeruginosa (strain PA7)), this protein is Carboxy-S-adenosyl-L-methionine synthase.